The following is a 589-amino-acid chain: Intermediate filament protein ifb-1 (589 aa).

The disordered stretch occupies residues 1 to 42 (MSSHKESSEYEMQYRSTIQPRTAVRSQSRQSGNYVSGGNGAG). The segment at 8–84 (SEYEMQYRST…LEATDKEKKT (77 aa)) is head. Polar residues predominate over residues 14-30 (YRSTIQPRTAVRSQSRQ). The 353-residue stretch at 81–433 (EKKTLQGLND…KMLEGEETRV (353 aa)) folds into the IF rod domain. Residues 85–116 (LQGLNDRLGNYIDRVKKLEEQNRKLVADLDEL) are coil 1A. The linker 1 stretch occupies residues 117-130 (RGKWGKDTSEIKIK). A coil 1B region spans residues 131–268 (YSESLSTARK…RVHEQEVKEL (138 aa)). The interval 269–285 (QALLAQAPADTREFFKN) is linker 12. The segment at 286–433 (ELALAIRDIK…KMLEGEETRV (148 aa)) is coil 2. Residues 434 to 588 (GLTQMVEQAV…THTQKTIQSG (155 aa)) form a tail region. A disordered region spans residues 444–470 (KTHSLQQQENTDSTRSVRGEVSTKTTF). The LTD domain occupies 466–584 (TKTTFQRSAK…EERATHTQKT (119 aa)).

This sequence belongs to the intermediate filament family. In terms of assembly, forms some heteromeric filaments with ifa-1, ifa-2, ifa-3 and probably ifa-4. As to expression, expressed in epidermal cells. Expressed in amphid sensory neurons, the excretory cells, the vulva, the uterus, the rectum and some neurons of the tail. Isoform a and isoform b display a similar pattern of expression. Isoform a is predominant in pharyngeal tonofilaments.

Its subcellular location is the cytoplasm. Functionally, cytoplasmic intermediate filaments provide mechanical strength to cells. Essential protein, involved in attachment structures in epidermal cells that connect muscles to the external cuticle. Required in morphogenesis and epidermal integrity. Probable component of embryonic epidermal attachment structures. Functions in larval muscle attachment independently of ifa-2. This chain is Intermediate filament protein ifb-1 (ifb-1), found in Caenorhabditis elegans.